Consider the following 140-residue polypeptide: Putative pre-16S rRNA nuclease (140 aa).

The protein belongs to the YqgF nuclease family.

It is found in the cytoplasm. In terms of biological role, could be a nuclease involved in processing of the 5'-end of pre-16S rRNA. The polypeptide is Putative pre-16S rRNA nuclease (Aeromonas hydrophila subsp. hydrophila (strain ATCC 7966 / DSM 30187 / BCRC 13018 / CCUG 14551 / JCM 1027 / KCTC 2358 / NCIMB 9240 / NCTC 8049)).